Reading from the N-terminus, the 160-residue chain is Nucleotide-binding protein VF_1240 (160 aa).

It belongs to the YajQ family.

Its function is as follows. Nucleotide-binding protein. The protein is Nucleotide-binding protein VF_1240 of Aliivibrio fischeri (strain ATCC 700601 / ES114) (Vibrio fischeri).